The following is a 149-amino-acid chain: D-aminoacyl-tRNA deacylase (149 aa).

The short motif at 137-138 (GP) is the Gly-cisPro motif, important for rejection of L-amino acids element.

This sequence belongs to the DTD family. In terms of assembly, homodimer.

It is found in the cytoplasm. The catalysed reaction is glycyl-tRNA(Ala) + H2O = tRNA(Ala) + glycine + H(+). It carries out the reaction a D-aminoacyl-tRNA + H2O = a tRNA + a D-alpha-amino acid + H(+). Functionally, an aminoacyl-tRNA editing enzyme that deacylates mischarged D-aminoacyl-tRNAs. Also deacylates mischarged glycyl-tRNA(Ala), protecting cells against glycine mischarging by AlaRS. Acts via tRNA-based rather than protein-based catalysis; rejects L-amino acids rather than detecting D-amino acids in the active site. By recycling D-aminoacyl-tRNA to D-amino acids and free tRNA molecules, this enzyme counteracts the toxicity associated with the formation of D-aminoacyl-tRNA entities in vivo and helps enforce protein L-homochirality. This Fervidobacterium nodosum (strain ATCC 35602 / DSM 5306 / Rt17-B1) protein is D-aminoacyl-tRNA deacylase.